We begin with the raw amino-acid sequence, 342 residues long: Protein-glutamate methylesterase/protein-glutamine glutaminase 2 (342 aa).

A Response regulatory domain is found at 2-119; sequence NIGIVNDLPL…GGSADPSQPL (118 aa). 4-aspartylphosphate is present on Asp53. The CheB-type methylesterase domain occupies 144-337; it reads PAPQGALPPL…DQLISLVQRN (194 aa). Residues Ser159, His186, and Asp279 contribute to the active site.

This sequence belongs to the CheB family. In terms of processing, phosphorylated by CheA. Phosphorylation of the N-terminal regulatory domain activates the methylesterase activity.

Its subcellular location is the cytoplasm. The catalysed reaction is [protein]-L-glutamate 5-O-methyl ester + H2O = L-glutamyl-[protein] + methanol + H(+). It carries out the reaction L-glutaminyl-[protein] + H2O = L-glutamyl-[protein] + NH4(+). In terms of biological role, involved in chemotaxis. Part of a chemotaxis signal transduction system that modulates chemotaxis in response to various stimuli. Catalyzes the demethylation of specific methylglutamate residues introduced into the chemoreceptors (methyl-accepting chemotaxis proteins or MCP) by CheR. Also mediates the irreversible deamidation of specific glutamine residues to glutamic acid. The sequence is that of Protein-glutamate methylesterase/protein-glutamine glutaminase 2 from Burkholderia mallei (strain ATCC 23344).